Here is a 337-residue protein sequence, read N- to C-terminus: Ycf66-like protein (337 aa).

A disordered region spans residues 111–337 (TEAELDQLEP…GADDQERFDY (227 aa)). The span at 113 to 123 (AELDQLEPEDE) shows a compositional bias: acidic residues. 2 stretches are compositionally biased toward basic and acidic residues: residues 133–143 (RGYDDDARSGR) and 253–269 (FGDRPERNAPRNARPYE). Residues 304-316 (QSRSGNPRSQRPS) are compositionally biased toward polar residues.

This sequence belongs to the ycf66 family.

The sequence is that of Ycf66-like protein from Synechocystis sp. (strain ATCC 27184 / PCC 6803 / Kazusa).